Here is a 563-residue protein sequence, read N- to C-terminus: Endoglucanase B (563 aa).

Positions 1–27 (MKKFLVLLIALIMIATLLVVPGVQTSA) form a signal peptide, or 31. E204 serves as the catalytic Proton donor. E363 serves as the catalytic Nucleophile. A disordered region spans residues 476–495 (SVTPSPSATPSPTTITAPPT). The Dockerin domain occupies 496-562 (DTVTYGDVNG…VLRSISELPY (67 aa)).

Belongs to the glycosyl hydrolase 5 (cellulase A) family.

It catalyses the reaction Endohydrolysis of (1-&gt;4)-beta-D-glucosidic linkages in cellulose, lichenin and cereal beta-D-glucans.. This enzyme catalyzes the endohydrolysis of 1,4-beta-glucosidic linkages in cellulose, lichenin and cereal beta-D-glucans. The chain is Endoglucanase B (celB) from Acetivibrio thermocellus (strain ATCC 27405 / DSM 1237 / JCM 9322 / NBRC 103400 / NCIMB 10682 / NRRL B-4536 / VPI 7372) (Clostridium thermocellum).